The primary structure comprises 684 residues: MNPPAAFLAGRQNIGSEVEISTIEKQRKELQLLIGELKDRDKELNDMVAVHQQQLLSWEEDRQKVLTLEERCSKLEGELHKRTEIIRSLTKKVKALESNQMECQTALQKTQLQLQEMAQKATHSSLLSEDLEARNETLSNTLVELSAQVGQLQAREQALTTMIKLKDKDIIEAVNHIADCSGKFKMLEHALRDAKMAETCIVKEKQDYKQKLKALKIEVNKLKEDLNEKTTENNEQREEIIRLKQEKSCLHDELLFTVEREKRKDELLNIAKSKQERTNSELHNLRQIYVKQQSDLQFLNFNVENSQELIQMYDSKMEESKALDSSRDMCLSDLENNHPKVDIKREKNQKSLFKDQKFEAMLVQQNRSDKSSCDECKEKKQQIDTVFGEKSVITLSSIFTKDLVEKHNLPWSLGGKTQIEPENKITLCKIHTKSPKCHGTGVQNEGKQPSETPTLSDEKQWHDVSVYLGLTNCPSSKHPEKLDVECQDQMERSEISCCQKNEACLGESGMCDSKCCHPSNFIIEAPGHMSDVEWMSIFKPSKMQRIVRLKSGCTCSESICGTQHDSPASELIAIQDSHSLGSSKSALREDETESSSNKKNSPTSLLIYKDAPAFNEKASIVLPSQDDFSPTSKLQRLLAESRQMVTDLELSTLLPISHENLTGSATNKSEVPEESAQKNTFVSY.

Coiled-coil stretches lie at residues 11 to 160 and 199 to 322; these read RQNI…QALT and TCIV…ESKA. The tract at residues 579–603 is disordered; sequence SLGSSKSALREDETESSSNKKNSPT. The segment covering 594-603 has biased composition (polar residues); that stretch reads SSSNKKNSPT. Short sequence motifs (LXXLL motif) lie at residues 634 to 638 and 650 to 654; these read LQRLL and LSTLL. The disordered stretch occupies residues 657 to 684; that stretch reads SHENLTGSATNKSEVPEESAQKNTFVSY. Over residues 659 to 669 the composition is skewed to polar residues; the sequence is ENLTGSATNKS.

In terms of assembly, interacts with ESR1 and ESR2 in the presence of estradiol/E2. The interaction with ESR2 recruits CCDC62 to ER target genes, including cyclin-D1/CCND1 AP-1 promoter. Interacts with GOPC. Highly expressed in adult testis. Expressed in both prostate epithelial and stromal cells, with predominant expression in epithelial cells (at protein level). Not detected in prostate by RT-PCR. Overexpressed in various cancers.

It localises to the cytoplasm. It is found in the nucleus. Its subcellular location is the cytoplasmic vesicle. The protein localises to the secretory vesicle. The protein resides in the acrosome. Functionally, nuclear receptor coactivator that can enhance preferentially estrogen receptors ESR1 and ESR2 transactivation. Also modulates progesterone/PGR, glucocorticoid/NR3C1 and androgen/AR receptors transactivation, although at lower level; little effect on vitamin D receptor/VDR. Required for normal spermiogenesis. It probably plays a role in acrosome formation. This Homo sapiens (Human) protein is Coiled-coil domain-containing protein 62 (CCDC62).